Reading from the N-terminus, the 279-residue chain is Vitamin B12-binding protein (279 aa).

Residues 1 to 20 (MTFRFLCWLTGLLLCTAAYA) form the signal peptide. A Fe/B12 periplasmic-binding domain is found at 24–276 (RVISLAPHAT…QLAELKLAPS (253 aa)). The cysteines at positions 189 and 265 are disulfide-linked.

This sequence belongs to the BtuF family. In terms of assembly, the complex is composed of two ATP-binding proteins (BtuD), two transmembrane proteins (BtuC) and a solute-binding protein (BtuF).

It is found in the periplasm. In terms of biological role, part of the ABC transporter complex BtuCDF involved in vitamin B12 import. Binds vitamin B12 and delivers it to the periplasmic surface of BtuC. This is Vitamin B12-binding protein from Pectobacterium atrosepticum (strain SCRI 1043 / ATCC BAA-672) (Erwinia carotovora subsp. atroseptica).